The chain runs to 592 residues: MKIENIEINIGIFGNVSVGKSSLVNCILGKKLSEIGYSKTTFVPQAYTNFGNREYHLESIRHLNEMANDQAKTINSTDKIKHVMHYIDKFSLLEDSRNGINDKIDSMFKIIIWDMPGFDTTHHGNMYLDWLSTNIKIFDIIVYVTEIMDDNLTMFDMLVSYVRKYDIKMICVVNKCDNMKLDKDSSVISLGTIDHDNRYIKINNTMANYATQYSIGNNNYITPFLPISVQNYEYFGNNLLLKNCDNDFGFEIFIASIINAINNHKLYFAVKHINRHIKVSKSKSMIDIIEYSRIVRKCNAQSRFIDISSGYNLSKYNLSENFWNLIRDTITSHASKIVQKCVKVVNDGKNIGFRSFDDVNIDIQVFLSFVNSVEIFKDFDDYPNDLVEYYRIKVISNLLNIYDVIADFEYTNQHYLDISNIFLYLELIKEHMRTEFDNYALKFIYTHRNIKTFESHYQESLINILKFIADNLSCCLSRNKFTSIVCMILINKQLYMKNKNNYLQYIISVKKLIKSVIKPTITINYIGPLDILIETTKKNVSIAISDNRLSSFYKQDINMFTVNNQLNNFYLGDTFDISVDFEKKLLELVKFE.

This is an uncharacterized protein from Acanthamoeba polyphaga mimivirus (APMV).